Here is a 204-residue protein sequence, read N- to C-terminus: Urease accessory protein UreG (204 aa).

Position 12-19 (G12–T19) interacts with GTP.

It belongs to the SIMIBI class G3E GTPase family. UreG subfamily. In terms of assembly, homodimer. UreD, UreF and UreG form a complex that acts as a GTP-hydrolysis-dependent molecular chaperone, activating the urease apoprotein by helping to assemble the nickel containing metallocenter of UreC. The UreE protein probably delivers the nickel.

It localises to the cytoplasm. Its function is as follows. Facilitates the functional incorporation of the urease nickel metallocenter. This process requires GTP hydrolysis, probably effectuated by UreG. The polypeptide is Urease accessory protein UreG (Pseudomonas fluorescens (strain SBW25)).